The primary structure comprises 336 residues: Anthranilate phosphoribosyltransferase (336 aa).

Residues Gly82, 85–86, Thr90, 92–95, 110–118, and Ser122 each bind 5-phospho-alpha-D-ribose 1-diphosphate; these read GD, NIST, and KHGNRFASG. Gly82 is a binding site for anthranilate. Ser94 contributes to the Mg(2+) binding site. Asn113 provides a ligand contact to anthranilate. Position 168 (Arg168) interacts with anthranilate. Positions 227 and 228 each coordinate Mg(2+).

This sequence belongs to the anthranilate phosphoribosyltransferase family. Homodimer. Requires Mg(2+) as cofactor.

The enzyme catalyses N-(5-phospho-beta-D-ribosyl)anthranilate + diphosphate = 5-phospho-alpha-D-ribose 1-diphosphate + anthranilate. Its pathway is amino-acid biosynthesis; L-tryptophan biosynthesis; L-tryptophan from chorismate: step 2/5. Its function is as follows. Catalyzes the transfer of the phosphoribosyl group of 5-phosphorylribose-1-pyrophosphate (PRPP) to anthranilate to yield N-(5'-phosphoribosyl)-anthranilate (PRA). The chain is Anthranilate phosphoribosyltransferase from Desulfitobacterium hafniense (strain DSM 10664 / DCB-2).